Consider the following 299-residue polypeptide: Biphenyl-2,3-diol 1,2-dioxygenase (299 aa).

VOC domains lie at 6–121 (ELGY…IFYG) and 146–267 (GIGH…FGWG). His149, His212, and Glu263 together coordinate Fe cation.

This sequence belongs to the extradiol ring-cleavage dioxygenase family. Homooctamer. It depends on Fe(2+) as a cofactor.

The enzyme catalyses biphenyl-2,3-diol + O2 = 2-hydroxy-6-oxo-6-phenylhexa-2,4-dienoate + H(+). It functions in the pathway xenobiotic degradation; biphenyl degradation; 2-hydroxy-2,4-pentadienoate and benzoate from biphenyl: step 3/4. The protein is Biphenyl-2,3-diol 1,2-dioxygenase (bphC) of Sphingomonas paucimobilis (Pseudomonas paucimobilis).